The sequence spans 364 residues: Fructose-bisphosphate aldolase B (364 aa).

N-acetylalanine is present on Ala2. Lys13 is subject to N6-succinyllysine. Ser36 is subject to Phosphoserine. Thr39 carries the post-translational modification Phosphothreonine. Arg43 contributes to the beta-D-fructose 1,6-bisphosphate binding site. Thr119 carries the post-translational modification Phosphothreonine. At Lys121 the chain carries N6-succinyllysine. Phosphoserine is present on Ser132. Catalysis depends on Glu188, which acts as the Proton acceptor. Lys230 serves as the catalytic Schiff-base intermediate with dihydroxyacetone-P. Residues Ser272, Ser276, Ser299, and Ser301 each carry the phosphoserine modification. 272 to 274 (SGG) serves as a coordination point for beta-D-fructose 1,6-bisphosphate. Arg304 provides a ligand contact to beta-D-fructose 1,6-bisphosphate. Ser309 carries the post-translational modification Phosphoserine. Lys317 carries the N6-succinyllysine modification.

Belongs to the class I fructose-bisphosphate aldolase family. Homotetramer. Interacts with BBS1, BBS2, BBS4 and BBS7. Forms a ternary complex with G6PD and TP53; this interaction is direct.

It localises to the cytoplasm. Its subcellular location is the cytosol. The protein localises to the cytoskeleton. It is found in the microtubule organizing center. The protein resides in the centrosome. It localises to the centriolar satellite. The catalysed reaction is beta-D-fructose 1,6-bisphosphate = D-glyceraldehyde 3-phosphate + dihydroxyacetone phosphate. It catalyses the reaction beta-D-fructose 1-phosphate = D-glyceraldehyde + dihydroxyacetone phosphate. It participates in carbohydrate degradation; glycolysis; D-glyceraldehyde 3-phosphate and glycerone phosphate from D-glucose: step 4/4. It functions in the pathway carbohydrate biosynthesis; gluconeogenesis. The protein operates within carbohydrate metabolism; fructose metabolism. In terms of biological role, catalyzes the aldol cleavage of fructose 1,6-biphosphate to form two triosephosphates dihydroxyacetone phosphate and D-glyceraldehyde 3-phosphate in glycolysis as well as the reverse stereospecific aldol addition reaction in gluconeogenesis. In fructolysis, metabolizes fructose 1-phosphate derived from the phosphorylation of dietary fructose by fructokinase into dihydroxyacetone phosphate and D-glyceraldehyde. Acts as an adapter independently of its enzymatic activity, exerts a tumor suppressor role by stabilizing the ternary complex with G6PD and TP53 to inhibit G6PD activity and keep oxidative pentose phosphate metabolism in check. This chain is Fructose-bisphosphate aldolase B (ALDOB), found in Ovis aries (Sheep).